Consider the following 264-residue polypeptide: Thymidylate synthase (264 aa).

Arginine 21 is a binding site for dUMP. Histidine 51 contacts (6R)-5,10-methylene-5,6,7,8-tetrahydrofolate. 126–127 lines the dUMP pocket; sequence RR. The active-site Nucleophile is cysteine 146. Residues 166 to 169, asparagine 177, and 207 to 209 each bind dUMP; these read RSCD and HLY. (6R)-5,10-methylene-5,6,7,8-tetrahydrofolate is bound at residue aspartate 169. Serine 263 is a (6R)-5,10-methylene-5,6,7,8-tetrahydrofolate binding site.

This sequence belongs to the thymidylate synthase family. Bacterial-type ThyA subfamily. In terms of assembly, homodimer.

The protein resides in the cytoplasm. It carries out the reaction dUMP + (6R)-5,10-methylene-5,6,7,8-tetrahydrofolate = 7,8-dihydrofolate + dTMP. Its pathway is pyrimidine metabolism; dTTP biosynthesis. Functionally, catalyzes the reductive methylation of 2'-deoxyuridine-5'-monophosphate (dUMP) to 2'-deoxythymidine-5'-monophosphate (dTMP) while utilizing 5,10-methylenetetrahydrofolate (mTHF) as the methyl donor and reductant in the reaction, yielding dihydrofolate (DHF) as a by-product. This enzymatic reaction provides an intracellular de novo source of dTMP, an essential precursor for DNA biosynthesis. This is Thymidylate synthase from Buchnera aphidicola subsp. Schizaphis graminum (strain Sg).